The sequence spans 127 residues: Small ribosomal subunit protein uS12 (127 aa).

At D89 the chain carries 3-methylthioaspartic acid. A disordered region spans residues 102–127 (LDTAGVKDRKQGRSKYGTKRPKEAKK). The segment covering 113–127 (GRSKYGTKRPKEAKK) has biased composition (basic residues).

Belongs to the universal ribosomal protein uS12 family. In terms of assembly, part of the 30S ribosomal subunit. Contacts proteins S8 and S17. May interact with IF1 in the 30S initiation complex.

With S4 and S5 plays an important role in translational accuracy. Its function is as follows. Interacts with and stabilizes bases of the 16S rRNA that are involved in tRNA selection in the A site and with the mRNA backbone. Located at the interface of the 30S and 50S subunits, it traverses the body of the 30S subunit contacting proteins on the other side and probably holding the rRNA structure together. The combined cluster of proteins S8, S12 and S17 appears to hold together the shoulder and platform of the 30S subunit. The sequence is that of Small ribosomal subunit protein uS12 from Nostoc punctiforme (strain ATCC 29133 / PCC 73102).